The primary structure comprises 267 residues: tRNA pseudouridine synthase A (267 aa).

The active-site Nucleophile is D55. Y111 contributes to the substrate binding site.

The protein belongs to the tRNA pseudouridine synthase TruA family.

It catalyses the reaction uridine(38/39/40) in tRNA = pseudouridine(38/39/40) in tRNA. Functionally, formation of pseudouridine at positions 38, 39 and 40 in the anticodon stem and loop of transfer RNAs. This chain is tRNA pseudouridine synthase A, found in Thermococcus onnurineus (strain NA1).